We begin with the raw amino-acid sequence, 276 residues long: A-factor receptor protein (276 aa).

Residues 8-68 (VQTWRSIVDA…AIMDEQTSTV (61 aa)) enclose the HTH tetR-type domain. The H-T-H motif DNA-binding region spans 31-50 (AISEILRRAKVTKGALYFHF). The segment covering 207-220 (EKAEREEQEARIAA) has biased composition (basic and acidic residues). Residues 207 to 276 (EKAEREEQEA…AGVAAGGVVA (70 aa)) are disordered. Low complexity predominate over residues 221-235 (EAKGAGSDAATDSGS). Residues 236–257 (RSGGSGLRGGGSGRGPRAGGAG) are compositionally biased toward gly residues.

Homodimer or multimer. Binds to both DNA and A-factor as a homodimer.

It localises to the cytoplasm. Represses adpA expression by binding to the promoter region in the absence of A-factor, causing repression of streptomycin production and of sporulation. This chain is A-factor receptor protein (arpA), found in Streptomyces griseus.